A 250-amino-acid chain; its full sequence is Ubiquinone/menaquinone biosynthesis C-methyltransferase UbiE (250 aa).

Residues Thr-74, Asp-94, 122–123 (DA), and Ser-139 contribute to the S-adenosyl-L-methionine site.

It belongs to the class I-like SAM-binding methyltransferase superfamily. MenG/UbiE family.

The catalysed reaction is a 2-demethylmenaquinol + S-adenosyl-L-methionine = a menaquinol + S-adenosyl-L-homocysteine + H(+). It carries out the reaction a 2-methoxy-6-(all-trans-polyprenyl)benzene-1,4-diol + S-adenosyl-L-methionine = a 5-methoxy-2-methyl-3-(all-trans-polyprenyl)benzene-1,4-diol + S-adenosyl-L-homocysteine + H(+). It functions in the pathway quinol/quinone metabolism; menaquinone biosynthesis; menaquinol from 1,4-dihydroxy-2-naphthoate: step 2/2. Its pathway is cofactor biosynthesis; ubiquinone biosynthesis. In terms of biological role, methyltransferase required for the conversion of demethylmenaquinol (DMKH2) to menaquinol (MKH2) and the conversion of 2-polyprenyl-6-methoxy-1,4-benzoquinol (DDMQH2) to 2-polyprenyl-3-methyl-6-methoxy-1,4-benzoquinol (DMQH2). In Ruegeria sp. (strain TM1040) (Silicibacter sp.), this protein is Ubiquinone/menaquinone biosynthesis C-methyltransferase UbiE.